The following is a 383-amino-acid chain: Succinyl-diaminopimelate desuccinylase (383 aa).

His72 serves as a coordination point for Zn(2+). Asp74 is a catalytic residue. Asp105 lines the Zn(2+) pocket. Residue Glu137 is the Proton acceptor of the active site. Zn(2+) contacts are provided by Glu138, Glu167, and His352.

This sequence belongs to the peptidase M20A family. DapE subfamily. As to quaternary structure, homodimer. The cofactor is Zn(2+). Co(2+) is required as a cofactor.

The catalysed reaction is N-succinyl-(2S,6S)-2,6-diaminopimelate + H2O = (2S,6S)-2,6-diaminopimelate + succinate. It functions in the pathway amino-acid biosynthesis; L-lysine biosynthesis via DAP pathway; LL-2,6-diaminopimelate from (S)-tetrahydrodipicolinate (succinylase route): step 3/3. Functionally, catalyzes the hydrolysis of N-succinyl-L,L-diaminopimelic acid (SDAP), forming succinate and LL-2,6-diaminopimelate (DAP), an intermediate involved in the bacterial biosynthesis of lysine and meso-diaminopimelic acid, an essential component of bacterial cell walls. In Ehrlichia ruminantium (strain Welgevonden), this protein is Succinyl-diaminopimelate desuccinylase.